Here is a 449-residue protein sequence, read N- to C-terminus: 3-phosphoshikimate 1-carboxyvinyltransferase (449 aa).

Positions 1 to 23 are disordered; the sequence is MSHSASPKPATARRSEALTGEIR. Lysine 28, serine 29, and arginine 33 together coordinate 3-phosphoshikimate. A phosphoenolpyruvate-binding site is contributed by lysine 28. Glycine 100 and arginine 128 together coordinate phosphoenolpyruvate. Residues serine 173, glutamine 175, aspartate 326, and lysine 353 each coordinate 3-phosphoshikimate. Phosphoenolpyruvate is bound at residue glutamine 175. Aspartate 326 serves as the catalytic Proton acceptor. Phosphoenolpyruvate is bound by residues arginine 357 and arginine 402.

The protein belongs to the EPSP synthase family. In terms of assembly, monomer.

The protein resides in the cytoplasm. The enzyme catalyses 3-phosphoshikimate + phosphoenolpyruvate = 5-O-(1-carboxyvinyl)-3-phosphoshikimate + phosphate. It functions in the pathway metabolic intermediate biosynthesis; chorismate biosynthesis; chorismate from D-erythrose 4-phosphate and phosphoenolpyruvate: step 6/7. Functionally, catalyzes the transfer of the enolpyruvyl moiety of phosphoenolpyruvate (PEP) to the 5-hydroxyl of shikimate-3-phosphate (S3P) to produce enolpyruvyl shikimate-3-phosphate and inorganic phosphate. In Pseudomonas sp. (strain PG2982), this protein is 3-phosphoshikimate 1-carboxyvinyltransferase.